A 1308-amino-acid chain; its full sequence is Transposon TX1 uncharacterized 149 kDa protein (1308 aa).

Residues 494 to 765 form the Reverse transcriptase domain; the sequence is EAFKKGELPL…KIIKYLGVYL (272 aa).

The chain is Transposon TX1 uncharacterized 149 kDa protein from Xenopus laevis (African clawed frog).